The chain runs to 93 residues: Large ribosomal subunit protein uL23c (93 aa).

Belongs to the universal ribosomal protein uL23 family. In terms of assembly, part of the 50S ribosomal subunit.

The protein localises to the plastid. The protein resides in the chloroplast. Functionally, binds to 23S rRNA. The protein is Large ribosomal subunit protein uL23c (rpl23) of Fragaria ananassa (Strawberry).